The chain runs to 60 residues: Large ribosomal subunit protein uL30 (60 aa).

It belongs to the universal ribosomal protein uL30 family. As to quaternary structure, part of the 50S ribosomal subunit.

The protein is Large ribosomal subunit protein uL30 of Desulfitobacterium hafniense (strain DSM 10664 / DCB-2).